Consider the following 484-residue polypeptide: tRNA-2-methylthio-N(6)-dimethylallyladenosine synthase (484 aa).

The MTTase N-terminal domain maps to 36 to 153 (GKLYIKTHGC…LPELIRARRE (118 aa)). Residues C45, C82, C116, C190, C194, and C197 each coordinate [4Fe-4S] cluster. A Radical SAM core domain is found at 176-415 (RAEGPSAFVS…HISAHAASIS (240 aa)). The TRAM domain maps to 416 to 479 (QSMVGSVQRV…SNSLRGRIQL (64 aa)). A disordered region spans residues 428–450 (EGPSRRDPNELTGKSENMRPVNF).

Belongs to the methylthiotransferase family. MiaB subfamily. In terms of assembly, monomer. The cofactor is [4Fe-4S] cluster.

It is found in the cytoplasm. The enzyme catalyses N(6)-dimethylallyladenosine(37) in tRNA + (sulfur carrier)-SH + AH2 + 2 S-adenosyl-L-methionine = 2-methylsulfanyl-N(6)-dimethylallyladenosine(37) in tRNA + (sulfur carrier)-H + 5'-deoxyadenosine + L-methionine + A + S-adenosyl-L-homocysteine + 2 H(+). In terms of biological role, catalyzes the methylthiolation of N6-(dimethylallyl)adenosine (i(6)A), leading to the formation of 2-methylthio-N6-(dimethylallyl)adenosine (ms(2)i(6)A) at position 37 in tRNAs that read codons beginning with uridine. This Xanthomonas oryzae pv. oryzae (strain MAFF 311018) protein is tRNA-2-methylthio-N(6)-dimethylallyladenosine synthase.